Here is a 70-residue protein sequence, read N- to C-terminus: UPF0270 protein VS_2853 (70 aa).

The protein belongs to the UPF0270 family.

The chain is UPF0270 protein VS_2853 from Vibrio atlanticus (strain LGP32) (Vibrio splendidus (strain Mel32)).